Reading from the N-terminus, the 98-residue chain is UPF0213 protein LACR_2011 (98 aa).

One can recognise a GIY-YIG domain in the interval 2–79 (NTHFTYVLQC…KLVRQQKLKL (78 aa)).

It belongs to the UPF0213 family.

This is UPF0213 protein LACR_2011 from Lactococcus lactis subsp. cremoris (strain SK11).